A 304-amino-acid chain; its full sequence is Sulfate adenylyltransferase subunit 2 1 (304 aa).

It belongs to the PAPS reductase family. CysD subfamily. Heterodimer composed of CysD, the smaller subunit, and CysN.

It carries out the reaction sulfate + ATP + H(+) = adenosine 5'-phosphosulfate + diphosphate. It participates in sulfur metabolism; hydrogen sulfide biosynthesis; sulfite from sulfate: step 1/3. Functionally, with CysN forms the ATP sulfurylase (ATPS) that catalyzes the adenylation of sulfate producing adenosine 5'-phosphosulfate (APS) and diphosphate, the first enzymatic step in sulfur assimilation pathway. APS synthesis involves the formation of a high-energy phosphoric-sulfuric acid anhydride bond driven by GTP hydrolysis by CysN coupled to ATP hydrolysis by CysD. The sequence is that of Sulfate adenylyltransferase subunit 2 1 from Marinobacter nauticus (strain ATCC 700491 / DSM 11845 / VT8) (Marinobacter aquaeolei).